A 614-amino-acid polypeptide reads, in one-letter code: Chaperone protein DnaK (614 aa).

Thr174 is subject to Phosphothreonine; by autocatalysis. Residues 576–614 (QTGGAAPGPDMGADPGAGGAQGDDNVVDAEYTEVDKDQK) form a disordered region. Low complexity predominate over residues 578-589 (GGAAPGPDMGAD).

It belongs to the heat shock protein 70 family.

Functionally, acts as a chaperone. The sequence is that of Chaperone protein DnaK from Desulfitobacterium hafniense (strain DSM 10664 / DCB-2).